The chain runs to 73 residues: Putative membrane protein insertion efficiency factor (73 aa).

Belongs to the UPF0161 family.

It is found in the cell inner membrane. In terms of biological role, could be involved in insertion of integral membrane proteins into the membrane. This is Putative membrane protein insertion efficiency factor from Jannaschia sp. (strain CCS1).